We begin with the raw amino-acid sequence, 349 residues long: GTP 3',8-cyclase (349 aa).

Residues 26-245 (GFGRAVTYLR…SSFWTLTDIP (220 aa)) form the Radical SAM core domain. R35 serves as a coordination point for GTP. Residues C42 and C46 each contribute to the [4Fe-4S] cluster site. An S-adenosyl-L-methionine-binding site is contributed by Y48. C49 provides a ligand contact to [4Fe-4S] cluster. Residue R84 participates in GTP binding. G88 is an S-adenosyl-L-methionine binding site. GTP is bound at residue T118. S142 provides a ligand contact to S-adenosyl-L-methionine. Residue K178 coordinates GTP. M212 contributes to the S-adenosyl-L-methionine binding site. Positions 275 and 278 each coordinate [4Fe-4S] cluster. GTP is bound at residue 280–282 (RVR). Residue C292 participates in [4Fe-4S] cluster binding.

Belongs to the radical SAM superfamily. MoaA family. In terms of assembly, monomer and homodimer. [4Fe-4S] cluster serves as cofactor.

The catalysed reaction is GTP + AH2 + S-adenosyl-L-methionine = (8S)-3',8-cyclo-7,8-dihydroguanosine 5'-triphosphate + 5'-deoxyadenosine + L-methionine + A + H(+). The protein operates within cofactor biosynthesis; molybdopterin biosynthesis. Functionally, catalyzes the cyclization of GTP to (8S)-3',8-cyclo-7,8-dihydroguanosine 5'-triphosphate. This is GTP 3',8-cyclase from Caulobacter vibrioides (strain ATCC 19089 / CIP 103742 / CB 15) (Caulobacter crescentus).